The primary structure comprises 207 residues: uncharacterized protein (207 aa).

This is an uncharacterized protein from Haemophilus influenzae (strain ATCC 51907 / DSM 11121 / KW20 / Rd).